The chain runs to 102 residues: MKVLENVNVALKANVYFDGKVTSRAIYVGGQKQTIGVVLPGEYEFSTTQPEQMQVTSGSFEVLLPGESQWQTFAEGSTFNLDADVSFSIRATDVAEYLCSYL.

It belongs to the nucleoside phosphorylase PpnP family.

It catalyses the reaction a purine D-ribonucleoside + phosphate = a purine nucleobase + alpha-D-ribose 1-phosphate. The catalysed reaction is adenosine + phosphate = alpha-D-ribose 1-phosphate + adenine. The enzyme catalyses cytidine + phosphate = cytosine + alpha-D-ribose 1-phosphate. It carries out the reaction guanosine + phosphate = alpha-D-ribose 1-phosphate + guanine. It catalyses the reaction inosine + phosphate = alpha-D-ribose 1-phosphate + hypoxanthine. The catalysed reaction is thymidine + phosphate = 2-deoxy-alpha-D-ribose 1-phosphate + thymine. The enzyme catalyses uridine + phosphate = alpha-D-ribose 1-phosphate + uracil. It carries out the reaction xanthosine + phosphate = alpha-D-ribose 1-phosphate + xanthine. Catalyzes the phosphorolysis of diverse nucleosides, yielding D-ribose 1-phosphate and the respective free bases. Can use uridine, adenosine, guanosine, cytidine, thymidine, inosine and xanthosine as substrates. Also catalyzes the reverse reactions. This is Pyrimidine/purine nucleoside phosphorylase from Shewanella amazonensis (strain ATCC BAA-1098 / SB2B).